Reading from the N-terminus, the 4128-residue chain is DNA-dependent protein kinase catalytic subunit (4128 aa).

Residue K117 is modified to N6-acetyllysine. One copy of the HEAT 1 repeat lies at 288–323 (DNYVSLFEVLLKWCAHTNVELKKAALSALESFLKQV). Phosphoserine is present on residues S511 and S687. K828 carries the N6-acetyllysine modification. Phosphoserine occurs at positions 841 and 893. The stretch at 1004 to 1040 (QDTVALLEAILDGIVDPVDSTLRDFCGRCIREFLKWS) is one HEAT 2 repeat. S1065 carries the phosphoserine modification. N6-acetyllysine is present on K1209. An interaction with C1D region spans residues 1503 to 1538 (LDLSCKQLASGLLELAFAFGGLCERLVSLLLNPAVL). The segment at 1503-1538 (LDLSCKQLASGLLELAFAFGGLCERLVSLLLNPAVL) is leucine-zipper. A TPR 1 repeat occupies 1723-1756 (PMQSREFPPGTPRFNNYVDCMKKFLDALELSQSP). At K1970 the chain carries N6-acetyllysine. Residues 2050-2073 (QSYSYSSQDPRPATGRFRRREQRD) are disordered. At S2056 the chain carries Phosphoserine; by autocatalysis. N6-acetyllysine is present on K2259. Positions 2436 to 3212 (LDIIYKMMPK…DNSMNVDQDG (777 aa)) are KIP-binding. The residue at position 2535 (T2535) is a Phosphothreonine. T2609 carries the phosphothreonine; by autocatalysis modification. Position 2612 is a phosphoserine; by autocatalysis (S2612). T2638 and T2647 each carry phosphothreonine; by autocatalysis. The tract at residues 2737-2765 (EKLSLMYARKGVAEQKREKEIKSELKMKQ) is may split the end of the DNA molecule, with the two strands separating around the region. Position 2789 is a phosphoserine (S2789). Positions 2906–3539 (PAKRVRGKAR…VYPFIISSES (634 aa)) constitute an FAT domain. TPR repeat units follow at residues 2920–2948 (VLRW…SEIG) and 2949–2982 (TKQI…QDWV). Residues 3200 to 3222 (LPEDNSMNVDQDGDPSDRMEVQE) are disordered. At S3205 the chain carries Phosphoserine. N6-acetyllysine occurs at positions 3241, 3260, 3621, 3638, and 3642. A PI3K/PI4K catalytic domain is found at 3722–4053 (FDERVTVMAS…ICYAKRKLAG (332 aa)). The segment at 3728–3734 (VMASLRR) is G-loop. Residues S3731 and S3821 each carry the phosphoserine modification. The catalytic loop stretch occupies residues 3919 to 3927 (GIGDRHLNN). Residues 3939-3964 (GIDFGHAFGSATQFLPVPELMPFRLT) are activation loop. S4026 carries the post-translational modification Phosphoserine. The FATC domain occupies 4096–4128 (SGLSEETQVKCLMDQATDPNILGRTWEGWEPWM).

The protein belongs to the PI3/PI4-kinase family. In terms of assembly, DNA-PK is a heterotrimer of PRKDC and the Ku dimer (composed of XRCC6/Ku70 and XRCC5/Ku86). Formation of this complex may be promoted by interaction with ILF3. Component of the core long-range non-homologous end joining (NHEJ) complex (also named DNA-PK complex) composed of PRKDC, LIG4, XRCC4, XRCC6/Ku70, XRCC5/Ku86 and NHEJ1/XLF. Additional component of the NHEJ complex includes PAXX. Following autophosphorylation, PRKDC dissociates from DNA. Interacts with DNA-PKcs-interacting protein (KIP) with the region upstream the kinase domain. PRKDC alone also interacts with and phosphorylates DCLRE1C, thereby activating the latent endonuclease activity of this protein. Interacts with C1D. Interacts with TTI1 and TELO2. Interacts with CIB1. Interacts with SETX. Interacts with NR4A3; the DNA-dependent protein kinase complex DNA-PK phosphorylates and activates NR4A3 and prevents NR4A3 ubiquitination and degradation. Interacts with BRAT1. Part of the HDP-RNP complex composed of at least HEXIM1, PRKDC, XRCC5, XRCC6, paraspeckle proteins (SFPQ, NONO, PSPC1, RBM14, and MATR3) and NEAT1 RNA. Interacts with KAT5. Autophosphorylated at two clusters, the T2609 cluster and the S2056 cluster. Autophosphorylated on Ser-2056, Thr-2609, Thr-2638 and Thr-2647. Ser-2056 and Thr-2609 are DNA damage-inducible phosphorylation sites (inducible with ionizing radiation, IR) dephosphorylated by PPP5C. Autophosphorylation induces a conformational change that leads to remodeling of the DNA-PK complex, requisite for efficient end processing and DNA repair. Autophosphorylation in trans within DNA-PK complexes loaded on DNA ends leads to the dissociation of PRKDC from DNA and the transition into the short-range NHEJ complex. Autophosphorylation of the T2609 cluster is required for hematopoietic development and protein synthesis in erythrocytes precursors. In terms of processing, S-nitrosylated by GAPDH. Post-translationally, polyubiquitinated by RNF144A, leading to proteasomal degradation.

The protein resides in the nucleus. The protein localises to the nucleolus. It localises to the cytoplasm. Its subcellular location is the cytosol. It catalyses the reaction L-seryl-[protein] + ATP = O-phospho-L-seryl-[protein] + ADP + H(+). It carries out the reaction L-threonyl-[protein] + ATP = O-phospho-L-threonyl-[protein] + ADP + H(+). With respect to regulation, activity seems to be attenuated by autophosphorylation. Binding to the SL1 region of U3 small nucleolar RNA promotes auto-phosphorylation activity. Inhibited by wortmannin. Serine/threonine-protein kinase that acts as a molecular sensor for DNA damage. Involved in DNA non-homologous end joining (NHEJ) required for double-strand break (DSB) repair and V(D)J recombination. Must be bound to DNA to express its catalytic properties. Promotes processing of hairpin DNA structures in V(D)J recombination by activation of the hairpin endonuclease artemis (DCLRE1C). Recruited by XRCC5 and XRCC6 to DNA ends and is required to (1) protect and align broken ends of DNA, thereby preventing their degradation, (2) and sequester the DSB for repair by NHEJ. Acts as a scaffold protein to aid the localization of DNA repair proteins to the site of damage. The assembly of the DNA-PK complex at DNA ends is also required for the NHEJ ligation step. Found at the ends of chromosomes, suggesting a further role in the maintenance of telomeric stability and the prevention of chromosomal end fusion. Also involved in modulation of transcription. As part of the DNA-PK complex, involved in the early steps of ribosome assembly by promoting the processing of precursor rRNA into mature 18S rRNA in the small-subunit processome. Binding to U3 small nucleolar RNA, recruits PRKDC and XRCC5/Ku86 to the small-subunit processome. Recognizes the substrate consensus sequence [ST]-Q. Phosphorylates 'Ser-139' of histone variant H2AX, thereby regulating DNA damage response mechanism. Phosphorylates ASF1A, DCLRE1C, c-Abl/ABL1, histone H1, HSPCA, c-jun/JUN, p53/TP53, PARP1, POU2F1, DHX9, FH, SRF, NHEJ1/XLF, XRCC1, XRCC4, XRCC5, XRCC6, WRN, MYC and RFA2. Can phosphorylate C1D not only in the presence of linear DNA but also in the presence of supercoiled DNA. Ability to phosphorylate p53/TP53 in the presence of supercoiled DNA is dependent on C1D. Acts as a regulator of the phosphatidylinositol 3-kinase/protein kinase B signal transduction by mediating phosphorylation of 'Ser-473' of protein kinase B (PKB/AKT1, PKB/AKT2, PKB/AKT3), promoting their activation. Contributes to the determination of the circadian period length by antagonizing phosphorylation of CRY1 'Ser-588' and increasing CRY1 protein stability, most likely through an indirect mechanism. Plays a role in the regulation of DNA virus-mediated innate immune response by assembling into the HDP-RNP complex, a complex that serves as a platform for IRF3 phosphorylation and subsequent innate immune response activation through the cGAS-STING pathway. Also regulates the cGAS-STING pathway by catalyzing phosphorylation of CGAS, thereby impairing CGAS oligomerization and activation. Also regulates the cGAS-STING pathway by mediating phosphorylation of PARP1. This chain is DNA-dependent protein kinase catalytic subunit (PRKDC), found in Homo sapiens (Human).